The primary structure comprises 352 residues: UDP-N-acetylglucosamine--N-acetylmuramyl-(pentapeptide) pyrophosphoryl-undecaprenol N-acetylglucosamine transferase 2 (352 aa).

UDP-N-acetyl-alpha-D-glucosamine-binding positions include 11–13 (SAG), Arg164, Ser194, and Gln289.

Belongs to the glycosyltransferase 28 family. MurG subfamily.

Its subcellular location is the cell membrane. It carries out the reaction di-trans,octa-cis-undecaprenyl diphospho-N-acetyl-alpha-D-muramoyl-L-alanyl-D-glutamyl-meso-2,6-diaminopimeloyl-D-alanyl-D-alanine + UDP-N-acetyl-alpha-D-glucosamine = di-trans,octa-cis-undecaprenyl diphospho-[N-acetyl-alpha-D-glucosaminyl-(1-&gt;4)]-N-acetyl-alpha-D-muramoyl-L-alanyl-D-glutamyl-meso-2,6-diaminopimeloyl-D-alanyl-D-alanine + UDP + H(+). Its pathway is cell wall biogenesis; peptidoglycan biosynthesis. Cell wall formation. Catalyzes the transfer of a GlcNAc subunit on undecaprenyl-pyrophosphoryl-MurNAc-pentapeptide (lipid intermediate I) to form undecaprenyl-pyrophosphoryl-MurNAc-(pentapeptide)GlcNAc (lipid intermediate II). This is UDP-N-acetylglucosamine--N-acetylmuramyl-(pentapeptide) pyrophosphoryl-undecaprenol N-acetylglucosamine transferase 2 from Bacillus thuringiensis subsp. konkukian (strain 97-27).